Consider the following 264-residue polypeptide: Thymidylate synthase (264 aa).

Arginine 21 contacts dUMP. Histidine 51 serves as a coordination point for (6R)-5,10-methylene-5,6,7,8-tetrahydrofolate. Residue 126 to 127 participates in dUMP binding; sequence RR. Cysteine 146 functions as the Nucleophile in the catalytic mechanism. DUMP is bound by residues 166–169, asparagine 177, and 207–209; these read RSCD and HLY. (6R)-5,10-methylene-5,6,7,8-tetrahydrofolate is bound at residue aspartate 169. Alanine 263 lines the (6R)-5,10-methylene-5,6,7,8-tetrahydrofolate pocket.

Belongs to the thymidylate synthase family. Bacterial-type ThyA subfamily. As to quaternary structure, homodimer.

It is found in the cytoplasm. The catalysed reaction is dUMP + (6R)-5,10-methylene-5,6,7,8-tetrahydrofolate = 7,8-dihydrofolate + dTMP. Its pathway is pyrimidine metabolism; dTTP biosynthesis. Functionally, catalyzes the reductive methylation of 2'-deoxyuridine-5'-monophosphate (dUMP) to 2'-deoxythymidine-5'-monophosphate (dTMP) while utilizing 5,10-methylenetetrahydrofolate (mTHF) as the methyl donor and reductant in the reaction, yielding dihydrofolate (DHF) as a by-product. This enzymatic reaction provides an intracellular de novo source of dTMP, an essential precursor for DNA biosynthesis. This Shewanella putrefaciens (strain CN-32 / ATCC BAA-453) protein is Thymidylate synthase.